The following is a 263-amino-acid chain: Aquaporin Lacbi1:247946 (263 aa).

The Cytoplasmic portion of the chain corresponds to 1-18 (MKLTISHHKCAIRKVMAE). The helical transmembrane segment at 19–39 (FVGVALLVIFGAGTACQVVLS) threads the bilayer. Topologically, residues 40–45 (TNPSSF) are extracellular. Residues 46–66 (LSINFGWAIGIATGAWVSAGI) traverse the membrane as a helical segment. At 67-89 (SGGHINPAITIAMATYRGFPWRE) the chain is on the cytoplasmic side. An NPA 1 motif is present at residues 72-74 (NPA). The helical transmembrane segment at 90–110 (VPGYIFAQALGGFVGAALVYA) threads the bilayer. Residues 111–143 (NYFHAIDIFEGGHIRTQATASLFATFALPYMTQ) are Extracellular-facing. Residues 144–164 (ASCFFSEFLATAVLFIVFLAL) form a helical membrane-spanning segment. Over 165–169 (NDKHN) the chain is Cytoplasmic. The chain crosses the membrane as a helical span at residues 170 to 190 (GALTNGLLPFALFILFIGLGA). Topologically, residues 191 to 227 (SLGMQTGYAVNPARDFGPRLFLAMAGYGKAVFNYRRQ) are extracellular. Residues 201–203 (NPA) carry the NPA 2 motif. A helical transmembrane segment spans residues 228–248 (YWIWAPIIAPILGAQAGGLLY). Over 249 to 263 (DTSIYNGDDSPIKWR) the chain is Cytoplasmic.

Belongs to the MIP/aquaporin (TC 1.A.8) family.

It localises to the membrane. The enzyme catalyses H2O(in) = H2O(out). Its function is as follows. Water channel required to facilitate the transport of water across membranes. Shows low but significant water conductivity, but no glycerol nor ammonium transport activities. This chain is Aquaporin Lacbi1:247946, found in Laccaria bicolor (strain S238N-H82 / ATCC MYA-4686) (Bicoloured deceiver).